The sequence spans 325 residues: Necdin (325 aa).

Disordered stretches follow at residues 1-69 and 77-96; these read MSEQ…IEDV and AAEEGRAHQPQSPARPIPAP. One can recognise an MAGE domain in the interval 102–301; that stretch reads LVQKAHELMW…QAWPSRYREA (200 aa).

Binds to the transactivation domains of E2F1 and p53. Binds also SV40 large T antigen and adenovirus E1A. Interacts with nucleobindin 1 and 2. As to expression, brain specific. Not detected in other tissues. Expressed in postmitotic neurons. In adult brain the highest expression is in hypothalamus. Highly expressed in thalamus and midbrain. Relatively low levels are in cerebral cortex, hippocampus, striatum, olfactory bulb, cerebellum, pons and spinal cord. Also detected in neurally differentiated embryonal carcinoma cells.

The protein resides in the cytoplasm. Its subcellular location is the nucleus. The protein localises to the nucleoplasm. It is found in the nucleus matrix. Its function is as follows. Growth suppressor that facilitates the entry of the cell into cell cycle arrest. Functionally similar to the retinoblastoma protein it binds to and represses the activity of cell-cycle-promoting proteins such as SV40 large T antigen, adenovirus E1A, and the transcription factor E2F. Necdin also interacts with p53 and works in an additive manner to inhibit cell growth. Also functions as a transcription factor and directly binds to specific guanosine-rich DNA sequences. This Mus musculus (Mouse) protein is Necdin (Ndn).